The primary structure comprises 267 residues: 2-keto-3-deoxy-L-rhamnonate aldolase (267 aa).

Catalysis depends on His-49, which acts as the Proton acceptor. Gln-151 is a binding site for substrate. Glu-153 is a Mg(2+) binding site. Substrate-binding residues include Ala-178 and Asp-179. A Mg(2+)-binding site is contributed by Asp-179.

It belongs to the HpcH/HpaI aldolase family. KDR aldolase subfamily. Homohexamer. It depends on Mg(2+) as a cofactor.

The enzyme catalyses 2-dehydro-3-deoxy-L-rhamnonate = (S)-lactaldehyde + pyruvate. In terms of biological role, catalyzes the reversible retro-aldol cleavage of 2-keto-3-deoxy-L-rhamnonate (KDR) to pyruvate and lactaldehyde. In Klebsiella pneumoniae subsp. pneumoniae (strain ATCC 700721 / MGH 78578), this protein is 2-keto-3-deoxy-L-rhamnonate aldolase.